The primary structure comprises 312 residues: Ribonuclease Z (312 aa).

7 residues coordinate Zn(2+): histidine 62, histidine 64, aspartate 66, histidine 67, histidine 139, aspartate 210, and histidine 268. Aspartate 66 (proton acceptor) is an active-site residue.

It belongs to the RNase Z family. Homodimer. Zn(2+) is required as a cofactor.

It carries out the reaction Endonucleolytic cleavage of RNA, removing extra 3' nucleotides from tRNA precursor, generating 3' termini of tRNAs. A 3'-hydroxy group is left at the tRNA terminus and a 5'-phosphoryl group is left at the trailer molecule.. Functionally, zinc phosphodiesterase, which displays some tRNA 3'-processing endonuclease activity. Probably involved in tRNA maturation, by removing a 3'-trailer from precursor tRNA. This is Ribonuclease Z from Crocosphaera subtropica (strain ATCC 51142 / BH68) (Cyanothece sp. (strain ATCC 51142)).